Here is a 770-residue protein sequence, read N- to C-terminus: Rho guanine nucleotide exchange factor 38 (770 aa).

A disordered region spans residues 33–88; that stretch reads KTDTVVDSSVSGDHSGSLRRSQSDRTEYNQKLQEKMTPQAECSSAETPTPEDEQQV. At threonine 34 the chain carries Phosphothreonine. Over residues 37–47 the composition is skewed to low complexity; that stretch reads VVDSSVSGDHS. Basic and acidic residues predominate over residues 53 to 66; the sequence is SQSDRTEYNQKLQE. In terms of domain architecture, DH spans 94–285; the sequence is KRAKIIRELI…KDINVNINEL (192 aa). A BAR domain is found at 327–542; the sequence is LKILTRGESQ…VHSLTFVKEN (216 aa). SH3 domains follow at residues 581–644 and 706–769; these read GAEE…PHNP and VDEQ…KMTY.

In terms of biological role, may act as a guanine-nucleotide releasing factor. The sequence is that of Rho guanine nucleotide exchange factor 38 (Arhgef38) from Mus musculus (Mouse).